The sequence spans 192 residues: Elongation factor P (192 aa).

Lysine 38 bears the N6-(3,6-diaminohexanoyl)-5-hydroxylysine mark.

The protein belongs to the elongation factor P family. May be beta-lysylated on the epsilon-amino group of Lys-38 by the combined action of EpmA and EpmB, and then hydroxylated on the C5 position of the same residue by EpmC (if this protein is present). Lysylation is critical for the stimulatory effect of EF-P on peptide-bond formation. The lysylation moiety may extend toward the peptidyltransferase center and stabilize the terminal 3-CCA end of the tRNA. Hydroxylation of the C5 position on Lys-38 may allow additional potential stabilizing hydrogen-bond interactions with the P-tRNA.

The protein localises to the cytoplasm. The protein operates within protein biosynthesis; polypeptide chain elongation. In terms of biological role, involved in peptide bond synthesis. Alleviates ribosome stalling that occurs when 3 or more consecutive Pro residues or the sequence PPG is present in a protein, possibly by augmenting the peptidyl transferase activity of the ribosome. Modification of Lys-38 is required for alleviation. In Mannheimia succiniciproducens (strain KCTC 0769BP / MBEL55E), this protein is Elongation factor P.